We begin with the raw amino-acid sequence, 87 residues long: Lipid-anchored plasma membrane protein uvi15 (87 aa).

The segment at 1–64 is disordered; sequence MSAQQFYGDK…MYVQQPQASD (64 aa). Low complexity predominate over residues 18–41; the sequence is QQAYGGPNYYPPQQNYPQQGYAPP.

The protein belongs to the CYSTM1 family. Palmitoylated.

Its subcellular location is the cell membrane. The protein localises to the cell tip. Required for the maintenance of viability of cells in stationary phase and in starvation conditions. This is Lipid-anchored plasma membrane protein uvi15 (uvi15) from Schizosaccharomyces pombe (strain 972 / ATCC 24843) (Fission yeast).